Here is a 450-residue protein sequence, read N- to C-terminus: Tripartite motif-containing protein 64C (450 aa).

The segment at 15-56 (CCICVNYFIDPVTTDCVHSFCRPCLCLCSEEGRAPMRCPLCR) adopts an RING-type zinc-finger fold. The segment at 87–128 (SSDNICVLHEETKELFCEADKRLLCGPCSESPEHMAHSHSPI) adopts a B box-type zinc-finger fold. Zn(2+)-binding residues include Cys-92, His-95, Cys-114, and His-120. Residues 191-218 (DEEEQRHLQALEREAKELFQQLQDSQVR) are a coiled coil. The B30.2/SPRY domain occupies 269–450 (ELTSWCITGV…LRPFFCFGCT (182 aa)).

Belongs to the TRIM/RBCC family.

The chain is Tripartite motif-containing protein 64C (TRIM64C) from Homo sapiens (Human).